A 555-amino-acid chain; its full sequence is Wee1-like protein kinase 2-A (555 aa).

Disordered regions lie at residues Met-1–Ala-81 and Phe-149–Thr-175. Residues Ser-38 to Cys-48 are compositionally biased toward polar residues. Residues Ser-68–Ser-78 are compositionally biased toward low complexity. Over residues Phe-149–Gln-160 the composition is skewed to polar residues. A Protein kinase domain is found at Phe-210–Leu-480. ATP contacts are provided by residues Ile-216–Val-224 and Lys-239. The Proton acceptor role is filled by Asp-337. Residues Asn-342 and Asp-374 each contribute to the Mg(2+) site. Residues Ala-487 to Leu-513 are a coiled coil. Ser-549 bears the Phosphoserine mark.

It belongs to the protein kinase superfamily. Ser/Thr protein kinase family. WEE1 subfamily. Interacts with prmt5; this promotes protesomal degradation of wee2-a in the nucleus. The interaction with prmt5 is disrupted upon activation of the DNA replication checkpoint. Subject to proteasomal degradation in the nucleus. As to expression, detected in egg (at protein level). Oocyte-specific maternally supplied protein. Present in immature and mature oocytes and in early (pregastrula) embryos, but not in post-gastrula embryos.

Its subcellular location is the nucleus. The protein localises to the cytoplasm. It is found in the cytosol. It catalyses the reaction L-tyrosyl-[protein] + ATP = O-phospho-L-tyrosyl-[protein] + ADP + H(+). In terms of biological role, oocyte-specific protein tyrosine kinase that phosphorylates and inhibits cdk1 and acts as a key regulator of meiosis. Required to maintain meiotic arrest in oocytes by phosphorylating cdk1 at 'Tyr-15', which inhibits cdk1 activity and prevents meiotic reentry. Negative regulator of mitosis. Involved in the mitotic DNA replication checkpoint. The chain is Wee1-like protein kinase 2-A (wee2-a) from Xenopus laevis (African clawed frog).